The sequence spans 233 residues: 7-cyano-7-deazaguanine synthase (233 aa).

An ATP-binding site is contributed by 17 to 27; that stretch reads LSGGLDSMVCA. Positions 196, 206, 209, and 212 each coordinate Zn(2+).

It belongs to the QueC family. It depends on Zn(2+) as a cofactor.

The catalysed reaction is 7-carboxy-7-deazaguanine + NH4(+) + ATP = 7-cyano-7-deazaguanine + ADP + phosphate + H2O + H(+). It participates in purine metabolism; 7-cyano-7-deazaguanine biosynthesis. Functionally, catalyzes the ATP-dependent conversion of 7-carboxy-7-deazaguanine (CDG) to 7-cyano-7-deazaguanine (preQ(0)). The chain is 7-cyano-7-deazaguanine synthase from Novosphingobium aromaticivorans (strain ATCC 700278 / DSM 12444 / CCUG 56034 / CIP 105152 / NBRC 16084 / F199).